The chain runs to 229 residues: Small ribosomal subunit protein uS3 (229 aa).

In terms of domain architecture, KH type-2 spans Val-17 to Glu-85. Positions Leu-202 to Ala-229 are disordered. A compositionally biased stretch (low complexity) spans Gly-219–Ala-229.

This sequence belongs to the universal ribosomal protein uS3 family. In terms of assembly, part of the 30S ribosomal subunit.

Functionally, binds the lower part of the 30S subunit head. The chain is Small ribosomal subunit protein uS3 from Archaeoglobus fulgidus (strain ATCC 49558 / DSM 4304 / JCM 9628 / NBRC 100126 / VC-16).